Reading from the N-terminus, the 430-residue chain is MTSVVVVGTQWGDEGKGKITDFLSADAEVIARYQGGDNAGHTIVIDNKKFKLHLIPSGIFFKEKISVIGNGVVVNPKSLVKELAYLHGEGVTTDNLRISDRAHVILPYHIKLDQLQEDAKGDNKIGTTIKGIGPAYMDKAARVGIRIADLLDREVFAERLKINLAEKNRLFEKMYDSTPLEFDDIFEEYYEYGQQIKQYVTDTSVILNDALDAGKRVLFEGAQGVMLDIDQGTYPFVTSSNPVAGGVTIGSGVGPSKINKVVGVCKAYTSRVGDGPFPTELFDEVGDRIREIGKEYGTTTGRPRRVGWFDSVVMRHSRRVSGITNLSLNSIDVLSGLDTVKICVAYDLDGKRIDYYPASLEQLKRCKPIYEELPGWSEDITACRSLDDLPENARNYVRRVGELVGVRISTFSVGPGREQTNILESVWSNI.

Residues 12-18 and 40-42 contribute to the GTP site; these read GDEGKGK and GHT. D13 serves as the catalytic Proton acceptor. Residues D13 and G40 each contribute to the Mg(2+) site. Residues 13–16, 38–41, T128, R142, Q223, T238, and R302 each bind IMP; these read DEGK and NAGH. Residue H41 is the Proton donor of the active site. Position 298–304 (298–304) interacts with substrate; it reads TTTGRPR. Residues R304, 330-332, and 412-414 each bind GTP; these read SID and SVG.

It belongs to the adenylosuccinate synthetase family. In terms of assembly, homodimer. Mg(2+) serves as cofactor.

Its subcellular location is the cytoplasm. The enzyme catalyses IMP + L-aspartate + GTP = N(6)-(1,2-dicarboxyethyl)-AMP + GDP + phosphate + 2 H(+). The protein operates within purine metabolism; AMP biosynthesis via de novo pathway; AMP from IMP: step 1/2. Plays an important role in the de novo pathway of purine nucleotide biosynthesis. Catalyzes the first committed step in the biosynthesis of AMP from IMP. The chain is Adenylosuccinate synthetase from Streptococcus agalactiae serotype III (strain NEM316).